The primary structure comprises 295 residues: Small ribosomal subunit protein uS2 (295 aa).

The segment at 273–295 (WAASSAPAAETLADPAADPSVKW) is disordered. Low complexity predominate over residues 274-295 (AASSAPAAETLADPAADPSVKW).

It belongs to the universal ribosomal protein uS2 family. In terms of assembly, component of the small ribosomal subunit. Mature ribosomes consist of a small (40S) and a large (60S) subunit. The 40S subunit contains about 33 different proteins and 1 molecule of RNA (18S). The 60S subunit contains about 49 different proteins and 3 molecules of RNA (25S, 5.8S and 5S). Interacts with RPS21.

Its subcellular location is the cytoplasm. Required for the assembly and/or stability of the 40S ribosomal subunit. Required for the processing of the 20S rRNA-precursor to mature 18S rRNA in a late step of the maturation of 40S ribosomal subunits. The polypeptide is Small ribosomal subunit protein uS2 (Paracoccidioides lutzii (strain ATCC MYA-826 / Pb01) (Paracoccidioides brasiliensis)).